Consider the following 1180-residue polypeptide: Integrin alpha-1 (1180 aa).

An N-terminal signal peptide occupies residues 1 to 28 (MVPRRPASLEVTVACIWLLTVILGFCVS). Residues 29-1142 (FNVDVKNSMS…SKDGLPGRVP (1114 aa)) lie on the Extracellular side of the membrane. An FG-GAP 1 repeat occupies 30-91 (NVDVKNSMSF…CPVGRERAMP (62 aa)). Cys82 and Cys92 are disulfide-bonded. N-linked (GlcNAc...) asparagine glycans are attached at residues Asn100, Asn105, Asn112, Asn217, Asn317, Asn341, Asn402, Asn418, and Asn459. The stretch at 101-160 (TSIPNVTEIKENMTFGSTLVTNPNGGFLACGPLYAYRCGHLHYTTGICSDVSPTFQVVNS) is one FG-GAP 2 repeat. Positions 175-364 (IVLDGSNSIY…LGERIFALEA (190 aa)) constitute a VWFA domain. One copy of the FG-GAP 3 repeat lies at 365-417 (TADQSAASFEMEMSQTGFSAHYSQDWVMLGAVGAYDWNGTVVMQKANQMVIPH). FG-GAP repeat units lie at residues 422-474 (QTEP…DGNI), 475-537 (NILQ…RFEY), 556-614 (SCTK…TIRE), and 618-678 (QRIP…FEPN). The Ca(2+) site is built by Asp497, Asp499, Asp501, and Asp505. Asn531 carries N-linked (GlcNAc...) asparagine glycosylation. Ca(2+) contacts are provided by Asp579, Asn581, Asp583, Asp587, Asp641, Asn643, Asp645, and Asp649. Residues Cys687 and Cys696 are joined by a disulfide bond. Asn698, Asn747, and Asn779 each carry an N-linked (GlcNAc...) asparagine glycan. An intrachain disulfide couples Cys702 to Cys755. Cys807 and Cys813 form a disulfide bridge. Asn820, Asn839, Asn882, Asn907, Asn938, Asn965, Asn973, and Asn1007 each carry an N-linked (GlcNAc...) asparagine glycan. Cys877 and Cys885 are oxidised to a cystine. 2 cysteine pairs are disulfide-bonded: Cys1029–Cys1062 and Cys1066–Cys1073. Residues Asn1084, Asn1103, and Asn1114 are each glycosylated (N-linked (GlcNAc...) asparagine). Residues 1143 to 1165 (LWVILLSAFAGLLLLMLLILALW) form a helical membrane-spanning segment. The Cytoplasmic portion of the chain corresponds to 1166-1180 (KIGFFKRPLKKKMEK). Positions 1168–1172 (GFFKR) match the GFFKR motif motif.

The protein belongs to the integrin alpha chain family. Heterodimer of an alpha and a beta subunit. Alpha-1 associates with beta-1. Interacts with RAB21. Interacts (via cytoplasmic domain) with PTPN2; activates PTPN2 phosphatase activity towards EGFR and negatively regulates EGF signaling.

The protein resides in the membrane. Functionally, integrin alpha-1/beta-1 is a receptor for laminin and collagen. It recognizes the proline-hydroxylated sequence G-F-P-G-E-R in collagen. Involved in anchorage-dependent, negative regulation of EGF-stimulated cell growth. In Rattus norvegicus (Rat), this protein is Integrin alpha-1 (Itga1).